The primary structure comprises 300 residues: UDP-N-acetylenolpyruvoylglucosamine reductase (300 aa).

Residues 28–193 (KTGGPADVLA…LQATFALEKG (166 aa)) form the FAD-binding PCMH-type domain. Arginine 172 is an active-site residue. Serine 222 acts as the Proton donor in catalysis. The active site involves glutamate 292.

It belongs to the MurB family. Requires FAD as cofactor.

Its subcellular location is the cytoplasm. It carries out the reaction UDP-N-acetyl-alpha-D-muramate + NADP(+) = UDP-N-acetyl-3-O-(1-carboxyvinyl)-alpha-D-glucosamine + NADPH + H(+). Its pathway is cell wall biogenesis; peptidoglycan biosynthesis. Functionally, cell wall formation. This is UDP-N-acetylenolpyruvoylglucosamine reductase from Enterococcus faecalis (strain ATCC 700802 / V583).